The primary structure comprises 487 residues: Calcium-dependent mitochondrial ATP-magnesium/phosphate carrier protein 2 (487 aa).

Residues 1–211 are Mitochondrial intermembrane-facing; the sequence is MEATKSSKQN…ISKHIKRSNY (211 aa). 4 EF-hand domains span residues 36-71, 72-107, 108-138, and 139-174; these read ERDL…LQIP, SGYK…KELE, LYRI…AGIE, and IKDE…YPHE. The Ca(2+) site is built by aspartate 85, asparagine 87, aspartate 89, arginine 91, and glutamate 96. Residues aspartate 152, aspartate 154, aspartate 156, and glutamate 163 each contribute to the Ca(2+) site. Solcar repeat units lie at residues 206–289, 301–389, and 400–483; these read IKRS…FKNA, IGTT…LKDL, and PGPL…MKKS. Residues 212–229 form a helical membrane-spanning segment; that stretch reads FIAGGIAGAASRTATAPL. At 230–263 the chain is on the mitochondrial matrix side; sequence DRLKVLLQIQKTDARIREAIKLIWKQGGVRGFFR. A helical membrane pass occupies residues 264–283; it reads GNGLNIVKVAPESAIKFYAY. The Mitochondrial intermembrane portion of the chain corresponds to 284–310; the sequence is ELFKNAIGENMGEDKADIGTTVRLFAG. The helical transmembrane segment at 311-324 threads the bilayer; the sequence is GMAGAVAQASIYPL. Over 325 to 363 the chain is Mitochondrial matrix; it reads DLVKTRLQTYTSQAGVAVPRLGTLTKDILVHEGPRAFYK. Residues 364–383 traverse the membrane as a helical segment; that stretch reads GLFPSLLGIIPYAGIDLAAY. At 384 to 405 the chain is on the mitochondrial intermembrane side; that stretch reads ETLKDLSRTYILQDAEPGPLVQ. The chain crosses the membrane as a helical span at residues 406 to 423; the sequence is LGCGTISGALGATCVYPL. Over 424–457 the chain is Mitochondrial matrix; it reads QVVRTRMQAERARTSMSGVFRRTISEEGYRALYK. The helical transmembrane segment at 458 to 477 threads the bilayer; sequence GLLPNLLKVVPAASITYMVY. Residues 478–487 lie on the Mitochondrial intermembrane side of the membrane; that stretch reads EAMKKSLELD.

This sequence belongs to the mitochondrial carrier (TC 2.A.29) family. As to expression, expressed in flowers, leaves, stems, roots and seedlings, mostly in aerial parts.

Its subcellular location is the mitochondrion inner membrane. With respect to regulation, counter-exchange transport activity is saturable and inhibited by pyridoxal-5'-phosphate, EDTA and EGTA. Activated by calcium Ca(2+) and manganese Mn(2+) ions, and slightly by iron Fe(2+) and zinc Zn(2+) ions. Repressed by copper ions Cu(2+) and slightly by magnesium Mg(2+) ions. Magnesium Mg(2+) ions promotes slightly ATP uptake, ATP-Mg(2+) being exchanged with ATP(4-). Its function is as follows. Calcium-dependent mitochondrial carrier protein that catalyzes the import of ATP co-transported with metal divalent cations across the mitochondrial inner membrane in exchange for phosphate (Pi). Can transport phosphate, AMP, ADP, ATP, adenosine 5'-phosphosulfate, sulfate and thiosulfate, and, to a lesser extent, other nucleotides. Binds calcium ions Ca(2+). Also mediates calcium uptake. This chain is Calcium-dependent mitochondrial ATP-magnesium/phosphate carrier protein 2, found in Arabidopsis thaliana (Mouse-ear cress).